The sequence spans 96 residues: Aspartyl/glutamyl-tRNA(Asn/Gln) amidotransferase subunit C (96 aa).

It belongs to the GatC family. Heterotrimer of A, B and C subunits.

The catalysed reaction is L-glutamyl-tRNA(Gln) + L-glutamine + ATP + H2O = L-glutaminyl-tRNA(Gln) + L-glutamate + ADP + phosphate + H(+). It catalyses the reaction L-aspartyl-tRNA(Asn) + L-glutamine + ATP + H2O = L-asparaginyl-tRNA(Asn) + L-glutamate + ADP + phosphate + 2 H(+). Allows the formation of correctly charged Asn-tRNA(Asn) or Gln-tRNA(Gln) through the transamidation of misacylated Asp-tRNA(Asn) or Glu-tRNA(Gln) in organisms which lack either or both of asparaginyl-tRNA or glutaminyl-tRNA synthetases. The reaction takes place in the presence of glutamine and ATP through an activated phospho-Asp-tRNA(Asn) or phospho-Glu-tRNA(Gln). This is Aspartyl/glutamyl-tRNA(Asn/Gln) amidotransferase subunit C from Neisseria gonorrhoeae (strain ATCC 700825 / FA 1090).